The chain runs to 1043 residues: Isoleucine--tRNA ligase (1043 aa).

Positions 49–59 (PFATGLPHYGH) match the 'HIGH' region motif. The 'KMSKS' region motif lies at 592 to 596 (KMSKR). ATP is bound at residue K595.

Belongs to the class-I aminoacyl-tRNA synthetase family. IleS type 2 subfamily. In terms of assembly, monomer. Zn(2+) serves as cofactor.

Its subcellular location is the cytoplasm. It carries out the reaction tRNA(Ile) + L-isoleucine + ATP = L-isoleucyl-tRNA(Ile) + AMP + diphosphate. Catalyzes the attachment of isoleucine to tRNA(Ile). As IleRS can inadvertently accommodate and process structurally similar amino acids such as valine, to avoid such errors it has two additional distinct tRNA(Ile)-dependent editing activities. One activity is designated as 'pretransfer' editing and involves the hydrolysis of activated Val-AMP. The other activity is designated 'posttransfer' editing and involves deacylation of mischarged Val-tRNA(Ile). This Chlamydia caviae (strain ATCC VR-813 / DSM 19441 / 03DC25 / GPIC) (Chlamydophila caviae) protein is Isoleucine--tRNA ligase.